Consider the following 357-residue polypeptide: Olfactory receptor 2B2 (357 aa).

At 1-25 the chain is on the extracellular side; the sequence is MNWVNKSVPQEFILLVFSDQPWLEI. Asparagine 5 is a glycosylation site (N-linked (GlcNAc...) asparagine). Residues 26-49 traverse the membrane as a helical segment; that stretch reads PPFVMFLFSYILTIFGNLTIILVS. Over 50 to 57 the chain is Cytoplasmic; sequence HVDFKLHT. A helical membrane pass occupies residues 58 to 79; the sequence is PMYFFLSNLSLLDLCYTTSTVP. Residues 80–100 are Extracellular-facing; the sequence is QMLVNICNTRKVISYGGCVAQ. Cysteine 97 and cysteine 189 form a disulfide bridge. The helical transmembrane segment at 101 to 120 threads the bilayer; the sequence is LFIFLALGSTECLLLAVMCF. Residues 121 to 139 are Cytoplasmic-facing; that stretch reads DRFVAICRPLHYSIIMHQR. Residues 140–158 form a helical membrane-spanning segment; the sequence is LCFQLAAASWISGFSNSVL. The Extracellular portion of the chain corresponds to 159–195; that stretch reads QSTWTLKMPLCGHKEVDHFFCEVPALLKLSCVDTTAN. Residues 196-219 traverse the membrane as a helical segment; it reads EAELFFISVLFLLIPVTLILISYA. At 220–236 the chain is on the cytoplasmic side; that stretch reads FIVQAVLRIQSAEGQRK. Residues 237–259 form a helical membrane-spanning segment; the sequence is AFGTCGSHLIVVSLFYGTAISMY. The Extracellular portion of the chain corresponds to 260 to 272; sequence LQPPSPSSKDRGK. The helical transmembrane segment at 273–292 threads the bilayer; that stretch reads MVSLFCGIIAPMLNPLIYTL. Residues 293–357 lie on the Cytoplasmic side of the membrane; it reads RNKEVKEAFK…YCNLPQRKFP (65 aa).

It belongs to the G-protein coupled receptor 1 family.

The protein resides in the cell membrane. Odorant receptor. This Homo sapiens (Human) protein is Olfactory receptor 2B2 (OR2B2).